A 487-amino-acid polypeptide reads, in one-letter code: MALRLYNTLSGEKEPFVPRVAGKVGMYVCGVTVYDFCHIGHARAGIVFDMIYRYLRFSGYDVTYIRNYTDIDDKIINRANQEGTDYRTIADRYIATFDEDMDRLGMLRPTIEPKATDHIEDIISIIQRLIDNGHAYAVDGDVYFAVETFPAYLKLSGRNLDDMLAGARVDVDERKRNPMDFALWKGSKPGEPWWESPWGKGRPGWHIECSAMSMRFLGPSFDIHGGGKDLVFPHHENEIAQSEGANGCQFVKYWLHNGFVNINSEKMSKSLGNFFTIREVLELFDPETLRFFILQAHYRSPLDYSDQNLREAQAGLSRIYEALAALDQALEKPATAIHLPASAAEFAEKVAGLLPRFREAMDDDFNTAQALGTLFDSIRTLNRLLAEGGGSSSASRADLEQLRAAVTEIGAVLGLFRIKPSDWLAAREAEKARHLEISPEEIEGLIVERAAARKNKDFKRSDEIRDYLLSRDIQLVDTPQGTAWKVK.

Position 29 (cysteine 29) interacts with Zn(2+). The 'HIGH' region motif lies at 31-41; that stretch reads VTVYDFCHIGH. Zn(2+) is bound by residues cysteine 209, histidine 234, and glutamate 238. A 'KMSKS' region motif is present at residues 266 to 270; it reads KMSKS. Lysine 269 is an ATP binding site.

It belongs to the class-I aminoacyl-tRNA synthetase family. In terms of assembly, monomer. It depends on Zn(2+) as a cofactor.

It is found in the cytoplasm. The catalysed reaction is tRNA(Cys) + L-cysteine + ATP = L-cysteinyl-tRNA(Cys) + AMP + diphosphate. This chain is Cysteine--tRNA ligase, found in Trichlorobacter lovleyi (strain ATCC BAA-1151 / DSM 17278 / SZ) (Geobacter lovleyi).